We begin with the raw amino-acid sequence, 410 residues long: Multidrug resistance protein MdtM (410 aa).

At 1-11 (MPRFFARHAAT) the chain is on the cytoplasmic side. The chain crosses the membrane as a helical span at residues 12–32 (LFFPMALILYDFAAYLSTDLI). The Periplasmic portion of the chain corresponds to 33 to 48 (QPGIINVVRDFNADVS). The chain crosses the membrane as a helical span at residues 49–69 (LAPAAVSLYLAGGMALQWLLG). The Cytoplasmic portion of the chain corresponds to 70–78 (PLSDRIGRK). The chain crosses the membrane as a helical span at residues 79–99 (PVLITGALIFTLACAATMFTT). Residues 100-103 (SMTQ) lie on the Periplasmic side of the membrane. Residues 104–124 (FLIARAIQGTSICFIATVGYV) form a helical membrane-spanning segment. Topologically, residues 125 to 140 (TVQEAFGQTKGIKLMA) are cytoplasmic. Residues 141–161 (IITSIVLIAPIIGPLSGAALM) form a helical membrane-spanning segment. At 162–167 (HFVHWK) the chain is on the periplasmic side. A helical membrane pass occupies residues 168–188 (VLFAIIAVMGFISFVGLLLAM). At 189–216 (PETVKRGAVPFSAKSVLRDFRNVFCNRL) the chain is on the cytoplasmic side. Residues 217 to 237 (FLFGAATISLSYIPMMSWVAV) traverse the membrane as a helical segment. Residues 238–251 (SPVILIDAGGLTTS) lie on the Periplasmic side of the membrane. The chain crosses the membrane as a helical span at residues 252 to 272 (QFAWTQVPVFGAVIVANAIVA). Topologically, residues 273–282 (RFVKDPTEPR) are cytoplasmic. Residues 283 to 303 (FIWRAVPIQLVGLALLIIGNL) traverse the membrane as a helical segment. Residues 304–307 (LSPH) are Periplasmic-facing. The chain crosses the membrane as a helical span at residues 308 to 328 (VWLWSVLGTSLYAFGIGLIFP). Topologically, residues 329-348 (TLFRFTLFSNNLPKGTVSAS) are cytoplasmic. A helical membrane pass occupies residues 349 to 369 (LNMVILMVMSVSVEIGRWLWF). At 370–373 (NGGR) the chain is on the periplasmic side. Residues 374–394 (LPFHLLAVVAGVIVVFTLAGL) form a helical membrane-spanning segment. Topologically, residues 395–410 (LNRVRQHQAAELAEEQ) are cytoplasmic.

This sequence belongs to the major facilitator superfamily.

The protein localises to the cell inner membrane. Proton-dependent efflux pump. Confers resistance to a broad spectrum of chemically unrelated substrates. This is Multidrug resistance protein MdtM (mdtM) from Escherichia coli O157:H7.